A 248-amino-acid chain; its full sequence is tRNA (guanine-N(1)-)-methyltransferase (248 aa).

Residues G113 and 133–138 (VGDYVL) contribute to the S-adenosyl-L-methionine site.

It belongs to the RNA methyltransferase TrmD family. As to quaternary structure, homodimer.

The protein resides in the cytoplasm. It catalyses the reaction guanosine(37) in tRNA + S-adenosyl-L-methionine = N(1)-methylguanosine(37) in tRNA + S-adenosyl-L-homocysteine + H(+). Functionally, specifically methylates guanosine-37 in various tRNAs. The protein is tRNA (guanine-N(1)-)-methyltransferase of Shewanella sp. (strain ANA-3).